The following is a 449-amino-acid chain: Sensor protein QseC (449 aa).

Topologically, residues 1-12 (MKLTQRLSLRVR) are cytoplasmic. Residues 13 to 33 (LTLIFLILVSITWAISSFVAW) traverse the membrane as a helical segment. Residues 34-161 (RKTTDNVDEL…REDMALAIVA (128 aa)) lie on the Periplasmic side of the membrane. The chain crosses the membrane as a helical span at residues 162-182 (AQLTPWLIALPFMLLILLLLL). The HAMP domain occupies 183-235 (HRELRPLKKLAQALRFRSPESETPLDAKGVPSEVRPLVEALNQLFSRIHSMMV). The Cytoplasmic portion of the chain corresponds to 183 to 449 (HRELRPLKKL…EGGFEAVVSW (267 aa)). Positions 243-449 (DAAHELRSPL…EGGFEAVVSW (207 aa)) constitute a Histidine kinase domain. His-246 is subject to Phosphohistidine; by autocatalysis.

The protein localises to the cell inner membrane. The enzyme catalyses ATP + protein L-histidine = ADP + protein N-phospho-L-histidine.. In terms of biological role, member of a two-component regulatory system QseB/QseC. Activates the flagella regulon by activating transcription of FlhDC. May activate QseB by phosphorylation. This Salmonella typhimurium (strain LT2 / SGSC1412 / ATCC 700720) protein is Sensor protein QseC (qseC).